The chain runs to 471 residues: Mitochondrial distribution and morphology protein 10 (471 aa).

Disordered stretches follow at residues Thr-272–Gly-291, Ala-374–Asn-394, and Ser-436–Ser-455. A compositionally biased stretch (low complexity) spans Ser-276 to Ser-288. Positions Ala-444–Ser-455 are enriched in gly residues.

The protein belongs to the MDM10 family. Component of the ER-mitochondria encounter structure (ERMES) or MDM complex, composed of mmm1, mdm10, mdm12 and mdm34. Associates with the mitochondrial outer membrane sorting assembly machinery SAM(core) complex.

The protein resides in the mitochondrion outer membrane. Component of the ERMES/MDM complex, which serves as a molecular tether to connect the endoplasmic reticulum and mitochondria. Components of this complex are involved in the control of mitochondrial shape and protein biogenesis and may function in phospholipid exchange. mdm10 is involved in the late assembly steps of the general translocase of the mitochondrial outer membrane (TOM complex). Functions in the tom40-specific route of the assembly of outer membrane beta-barrel proteins, including the association of tom40 with the receptor tom22 and small TOM proteins. Can associate with the SAM(core) complex as well as the mdm12-mmm1 complex, both involved in late steps of the major beta-barrel assembly pathway, that is responsible for biogenesis of all outer membrane beta-barrel proteins. May act as a switch that shuttles between both complexes and channels precursor proteins into the tom40-specific pathway. Plays a role in mitochondrial morphology and in the inheritance of mitochondria. This is Mitochondrial distribution and morphology protein 10 (mdmB) from Neosartorya fischeri (strain ATCC 1020 / DSM 3700 / CBS 544.65 / FGSC A1164 / JCM 1740 / NRRL 181 / WB 181) (Aspergillus fischerianus).